Reading from the N-terminus, the 276-residue chain is MSKRLALAYSKKDPAGSGMAREIKDMMGEEFEISDKRCELIEVDREILYINGSQFEGFDYLAVLSRHSGTPNHPIFTAHVSGNFGRARYGGDHFKLSIAIPSLMKEYLISVSKRAEEIGYWVGFEPTHHGPTLDIPTAFLEIGCDETAWRDERGLRAAAESVLEAIESWKDGKFVAAVAFGGPHINDHFTRVELFTRFAIGHAARKLDAEWVDGEMVKQAVSRNGEPTGVAIVDNKGLKGEDRERIEGALRDLGLEVIRVKKILRDELGEEEGEEI.

Belongs to the DtdA deacylase family. As to quaternary structure, monomer. Zn(2+) is required as a cofactor.

The enzyme catalyses a D-aminoacyl-tRNA + H2O = a tRNA + a D-alpha-amino acid + H(+). It catalyses the reaction glycyl-tRNA(Ala) + H2O = tRNA(Ala) + glycine + H(+). In terms of biological role, D-aminoacyl-tRNA deacylase with broad substrate specificity. By recycling D-aminoacyl-tRNA to D-amino acids and free tRNA molecules, this enzyme counteracts the toxicity associated with the formation of D-aminoacyl-tRNA entities in vivo. This is D-aminoacyl-tRNA deacylase from Korarchaeum cryptofilum (strain OPF8).